The primary structure comprises 259 residues: Emerin (259 aa).

N-acetylmethionine is present on Met1. The region spanning 1–45 (MDDYAVLSDTELAAVLRQYNIPHGPIVGSTRKLYEKKIFEYETQR) is the LEM domain. A phosphoserine mark is found at Ser8, Ser29, Ser54, Ser72, Ser88, Ser99, Ser141, and Ser142. The segment at 46-223 (RRLLPPNSSS…PAAALGQDRQ (178 aa)) is interaction with F-actin. Phosphotyrosine is present on Tyr161. Residues 168–187 (RPISNVSRSSLGLSYYPTSS) form an interaction with CTNNB1 region. Phosphoserine occurs at positions 171, 174, and 176. A helical transmembrane segment spans residues 224-244 (VPLWGQLLLFLVFAAFLLFVY).

In terms of assembly, interacts with lamins A and C, BANF1, GMCL, BCLAF1 and YTHDC1/YT521. Interacts with TMEM43; the interaction retains emerin in the inner nuclear membrane. Interacts with ACTB, SPTAN1, F-actin, CTNNB1 and beta-tubulin. Interacts with SUN1 and SUN2. Interacts with TMEM201. Interacts with NEMP1. In terms of tissue distribution, in the ovary, highest expression is seen in primordial follicle oocytes (at protein level). Detected in embryonic fibroblasts, skeletal muscle, heart muscle and tongue epithelium (at protein level). Widely expressed.

The protein resides in the nucleus inner membrane. It localises to the nucleus outer membrane. Its function is as follows. Stabilizes and promotes the formation of a nuclear actin cortical network. Stimulates actin polymerization in vitro by binding and stabilizing the pointed end of growing filaments. Inhibits beta-catenin activity by preventing its accumulation in the nucleus. Acts by influencing the nuclear accumulation of beta-catenin through a CRM1-dependent export pathway. Links centrosomes to the nuclear envelope via a microtubule association. Required for proper localization of non-farnesylated prelamin-A/C. Together with NEMP1, contributes to nuclear envelope stiffness in germ cells. This is Emerin (Emd) from Mus musculus (Mouse).